Reading from the N-terminus, the 282-residue chain is Ubiquinone biosynthesis protein COQ4 homolog, mitochondrial (282 aa).

Residues 1-30 (MFVRKSCYSLINATRRCLRYRQLSSTTAGT) constitute a mitochondrion transit peptide. 4 residues coordinate Zn(2+): His186, Asp187, His190, and Glu202.

Belongs to the COQ4 family. Component of a multi-subunit COQ enzyme complex. Zn(2+) serves as cofactor.

The protein localises to the mitochondrion inner membrane. The catalysed reaction is a 4-hydroxy-3-methoxy-5-(all-trans-polyprenyl)benzoate + H(+) = a 2-methoxy-6-(all-trans-polyprenyl)phenol + CO2. The protein operates within cofactor biosynthesis; ubiquinone biosynthesis. In terms of biological role, lyase that catalyzes the C1-decarboxylation of 4-hydroxy-3-methoxy-5-(all-trans-polyprenyl)benzoic acid into 2-methoxy-6-(all-trans-polyprenyl)phenol during ubiquinone biosynthesis. The sequence is that of Ubiquinone biosynthesis protein COQ4 homolog, mitochondrial from Anopheles gambiae (African malaria mosquito).